The sequence spans 248 residues: UPF0273 protein APE_1505.1 (248 aa).

Positions 3–247 (DRVKTGIPGM…VVRIGRRVSI (245 aa)) constitute a KaiC domain. An ATP-binding site is contributed by 30-37 (GGPGTGKS).

This sequence belongs to the UPF0273 family.

The polypeptide is UPF0273 protein APE_1505.1 (Aeropyrum pernix (strain ATCC 700893 / DSM 11879 / JCM 9820 / NBRC 100138 / K1)).